Consider the following 516-residue polypeptide: NAD(P)H-quinone oxidoreductase chain 4, chloroplastic (516 aa).

A run of 14 helical transmembrane segments spans residues 4–24 (FPWL…IFLL), 37–57 (LCIC…HFQL), 87–107 (IGPI…AWPV), 111–131 (AQLF…SFSS), 134–154 (LLLF…LLSM), 167–187 (FILY…GIGL), 208–228 (ALEV…LPII), 242–262 (HYST…YGLV), 272–292 (AHCL…IYAA), 305–325 (IAYS…SLSD), 330–350 (GAIL…FLAG), 386–406 (LALP…GIIT), 416–436 (ILIA…SLSM), and 462–482 (LFVS…PDFV).

This sequence belongs to the complex I subunit 4 family.

The protein resides in the plastid. It is found in the chloroplast thylakoid membrane. The catalysed reaction is a plastoquinone + NADH + (n+1) H(+)(in) = a plastoquinol + NAD(+) + n H(+)(out). The enzyme catalyses a plastoquinone + NADPH + (n+1) H(+)(in) = a plastoquinol + NADP(+) + n H(+)(out). The sequence is that of NAD(P)H-quinone oxidoreductase chain 4, chloroplastic from Oenothera argillicola (Appalachian evening primrose).